Reading from the N-terminus, the 175-residue chain is Large ribosomal subunit protein uL10 (175 aa).

The protein belongs to the universal ribosomal protein uL10 family. As to quaternary structure, part of the ribosomal stalk of the 50S ribosomal subunit. The N-terminus interacts with L11 and the large rRNA to form the base of the stalk. The C-terminus forms an elongated spine to which L12 dimers bind in a sequential fashion forming a multimeric L10(L12)X complex.

In terms of biological role, forms part of the ribosomal stalk, playing a central role in the interaction of the ribosome with GTP-bound translation factors. The sequence is that of Large ribosomal subunit protein uL10 from Psychrobacter arcticus (strain DSM 17307 / VKM B-2377 / 273-4).